A 354-amino-acid chain; its full sequence is UDP-N-acetylglucosamine--N-acetylmuramyl-(pentapeptide) pyrophosphoryl-undecaprenol N-acetylglucosamine transferase (354 aa).

Residues 13-15 (SGG), asparagine 125, serine 189, isoleucine 242, 261-266 (ALTVSE), and glutamine 286 each bind UDP-N-acetyl-alpha-D-glucosamine.

It belongs to the glycosyltransferase 28 family. MurG subfamily.

The protein localises to the cell inner membrane. It carries out the reaction di-trans,octa-cis-undecaprenyl diphospho-N-acetyl-alpha-D-muramoyl-L-alanyl-D-glutamyl-meso-2,6-diaminopimeloyl-D-alanyl-D-alanine + UDP-N-acetyl-alpha-D-glucosamine = di-trans,octa-cis-undecaprenyl diphospho-[N-acetyl-alpha-D-glucosaminyl-(1-&gt;4)]-N-acetyl-alpha-D-muramoyl-L-alanyl-D-glutamyl-meso-2,6-diaminopimeloyl-D-alanyl-D-alanine + UDP + H(+). It functions in the pathway cell wall biogenesis; peptidoglycan biosynthesis. Functionally, cell wall formation. Catalyzes the transfer of a GlcNAc subunit on undecaprenyl-pyrophosphoryl-MurNAc-pentapeptide (lipid intermediate I) to form undecaprenyl-pyrophosphoryl-MurNAc-(pentapeptide)GlcNAc (lipid intermediate II). The protein is UDP-N-acetylglucosamine--N-acetylmuramyl-(pentapeptide) pyrophosphoryl-undecaprenol N-acetylglucosamine transferase of Buchnera aphidicola subsp. Acyrthosiphon pisum (strain APS) (Acyrthosiphon pisum symbiotic bacterium).